Here is a 200-residue protein sequence, read N- to C-terminus: Protein Rv0461 (200 aa).

The disordered stretch occupies residues 47-67; it reads DRAGKSWPGSTPKPQEDPVGV. The next 3 helical transmembrane spans lie at 102–122, 134–154, and 159–179; these read FVLV…SLFY, VFVV…LALV, and LITA…AAAA.

It localises to the cell membrane. This chain is Protein Rv0461, found in Mycobacterium tuberculosis (strain ATCC 25618 / H37Rv).